Consider the following 57-residue polypeptide: UPF0391 membrane protein Xaut_1725 (57 aa).

A run of 2 helical transmembrane segments spans residues 4–24 (WAVT…GGIA) and 30–50 (IAKI…VAGL).

Belongs to the UPF0391 family.

It is found in the cell membrane. The protein is UPF0391 membrane protein Xaut_1725 of Xanthobacter autotrophicus (strain ATCC BAA-1158 / Py2).